Here is a 315-residue protein sequence, read N- to C-terminus: Probable cytochrome c oxidase subunit 2 (315 aa).

One can recognise an RPE1 insert domain in the interval 6-53 (RHLSKPAYREEFKGDTSPRTAAYISNRADASLGSTYKLPLEAKFWKMS). Transmembrane regions (helical) follow at residues 41-61 (YKLP…CFLI), 96-116 (LLYI…FVCI), and 133-153 (VLIE…IAVP). 4 residues coordinate Cu cation: His235, Cys270, Cys274, and His278.

This sequence belongs to the cytochrome c oxidase subunit 2 family. It depends on Cu cation as a cofactor. Requires heme as cofactor.

The protein localises to the cell membrane. The enzyme catalyses 4 Fe(II)-[cytochrome c] + O2 + 8 H(+)(in) = 4 Fe(III)-[cytochrome c] + 2 H2O + 4 H(+)(out). In terms of biological role, subunits I and II form the functional core of the enzyme complex. Electrons originating in cytochrome c are transferred via heme a and Cu(A) to the binuclear center formed by heme a3 and Cu(B). This is Probable cytochrome c oxidase subunit 2 (ctaC) from Rickettsia felis (strain ATCC VR-1525 / URRWXCal2) (Rickettsia azadi).